Reading from the N-terminus, the 377-residue chain is Lactosylceramide 1,3-N-acetyl-beta-D-glucosaminyltransferase (377 aa).

The Cytoplasmic segment spans residues 1–14 (MRVFVSSRRVKRWQ). Residues 15 to 35 (FFHLFAICFILSFMVFWGPIN) traverse the membrane as a helical; Signal-anchor for type II membrane protein segment. The Lumenal segment spans residues 36-377 (NYIMSHMKSY…NSYPCRAAFA (342 aa)). Residue asparagine 58 is glycosylated (N-linked (GlcNAc...) asparagine).

It belongs to the glycosyltransferase 31 family.

Its subcellular location is the golgi apparatus membrane. It carries out the reaction a beta-D-Gal-(1-&gt;4)-beta-D-Glc-(1&lt;-&gt;1)-Cer(d18:1(4E)) + UDP-N-acetyl-alpha-D-glucosamine = a beta-D-GlcNAc-(1-&gt;3)-beta-D-Gal-(1-&gt;4)-beta-D-Glc-(1&lt;-&gt;1)-Cer(d18:1(4E)) + UDP + H(+). The catalysed reaction is a neolactoside nLc4Cer(d18:1(4E)) + UDP-N-acetyl-alpha-D-glucosamine = a neolactoside IV(3)-beta-GlcNAc-nLc4Cer(d18:1(4E)) + UDP + H(+). Its pathway is protein modification; protein glycosylation. Beta-1,3-N-acetylglucosaminyltransferase that plays a key role in the synthesis of lacto- or neolacto-series carbohydrate chains on glycolipids, notably by participating in biosynthesis of HNK-1 and Lewis X carbohydrate structures. Has strong activity toward lactosylceramide (LacCer) and neolactotetraosylceramide (nLc(4)Cer; paragloboside), resulting in the synthesis of Lc(3)Cer and neolactopentaosylceramide (nLc(5)Cer), respectively. Probably plays a central role in regulating neolacto-series glycolipid synthesis during embryonic development. In Rattus norvegicus (Rat), this protein is Lactosylceramide 1,3-N-acetyl-beta-D-glucosaminyltransferase.